A 256-amino-acid polypeptide reads, in one-letter code: Major prion protein (256 aa).

Residues 1-24 (MVKSHIGSWILVLFVAMWSDVGLC) form the signal peptide. Positions 25-233 (KKRPKPGGGW…ESQAYYQRGA (209 aa)) are interaction with GRB2, ERI3 and SYN1. The tract at residues 28–110 (PKPGGGWNTG…QWNKPSKPKT (83 aa)) is disordered. Tandem repeats lie at residues 54 to 62 (PQGGGGWGQ), 63 to 70 (PHGGGWGQ), 71 to 78 (PHGGGWGQ), 79 to 86 (PHGGGWGQ), and 87 to 95 (PHGGGGWGQ). Positions 54–95 (PQGGGGWGQPHGGGWGQPHGGGWGQPHGGGWGQPHGGGGWGQ) are 5 X 8 AA tandem repeats of P-H-G-G-G-W-G-Q. Positions 55-97 (QGGGGWGQPHGGGWGQPHGGGWGQPHGGGWGQPHGGGGWGQGG) are enriched in gly residues. Residues H64, G65, G66, H72, G73, G74, H80, G81, G82, H88, G90, and G91 each contribute to the Cu(2+) site. A disulfide bridge links C182 with C217. 2 N-linked (GlcNAc...) asparagine glycosylation sites follow: N184 and N200. A lipid anchor (GPI-anchor amidated alanine) is attached at A233. Positions 234–256 (SVILFSPPPVILLISFLIFLIVG) are cleaved as a propeptide — removed in mature form.

The protein belongs to the prion family. In terms of assembly, monomer and homodimer. Has a tendency to aggregate into amyloid fibrils containing a cross-beta spine, formed by a steric zipper of superposed beta-strands. Soluble oligomers may represent an intermediate stage on the path to fibril formation. Copper binding may promote oligomerization. Interacts with GRB2, APP, ERI3/PRNPIP and SYN1. Mislocalized cytosolically exposed PrP interacts with MGRN1; this interaction alters MGRN1 subcellular location and causes lysosomal enlargement. Interacts with KIAA1191.

The protein localises to the cell membrane. Its subcellular location is the golgi apparatus. In terms of biological role, its primary physiological function is unclear. Has cytoprotective activity against internal or environmental stresses. May play a role in neuronal development and synaptic plasticity. May be required for neuronal myelin sheath maintenance. May play a role in iron uptake and iron homeostasis. Soluble oligomers are toxic to cultured neuroblastoma cells and induce apoptosis (in vitro). Association with GPC1 (via its heparan sulfate chains) targets PRNP to lipid rafts. Also provides Cu(2+) or Zn(2+) for the ascorbate-mediated GPC1 deaminase degradation of its heparan sulfate side chains. The sequence is that of Major prion protein (PRNP) from Capra hircus (Goat).